Here is a 709-residue protein sequence, read N- to C-terminus: Elongation factor G (709 aa).

A tr-type G domain is found at 9-296 (AKVRNIGIMA…AVVRYLPSPL (288 aa)). Residues 18–25 (AHIDAGKT), 86–90 (DTPGH), and 140–143 (NKLD) contribute to the GTP site.

This sequence belongs to the TRAFAC class translation factor GTPase superfamily. Classic translation factor GTPase family. EF-G/EF-2 subfamily.

It localises to the cytoplasm. Catalyzes the GTP-dependent ribosomal translocation step during translation elongation. During this step, the ribosome changes from the pre-translocational (PRE) to the post-translocational (POST) state as the newly formed A-site-bound peptidyl-tRNA and P-site-bound deacylated tRNA move to the P and E sites, respectively. Catalyzes the coordinated movement of the two tRNA molecules, the mRNA and conformational changes in the ribosome. The polypeptide is Elongation factor G (Streptomyces griseus subsp. griseus (strain JCM 4626 / CBS 651.72 / NBRC 13350 / KCC S-0626 / ISP 5235)).